The chain runs to 163 residues: HTH-type transcriptional regulator IscR (163 aa).

Residues 2–131 enclose the HTH rrf2-type domain; sequence RLTSKGRYAV…NNITLGELVN (130 aa). The H-T-H motif DNA-binding region spans 28–51; the sequence is LADISERQGISLSYLEQLFSRLRK. [2Fe-2S] cluster-binding residues include C92, C98, and C104.

[2Fe-2S] cluster is required as a cofactor.

In terms of biological role, regulates the transcription of several operons and genes involved in the biogenesis of Fe-S clusters and Fe-S-containing proteins. The sequence is that of HTH-type transcriptional regulator IscR from Enterobacter sp. (strain 638).